Here is a 324-residue protein sequence, read N- to C-terminus: Putative exosome complex exonuclease RRP42 (324 aa).

The protein belongs to the RNase PH family. Component of the RNA exosome complex.

Its subcellular location is the nucleus. It localises to the nucleolus. The protein resides in the cytoplasm. Functionally, non-catalytic component of the RNA exosome complex which has 3'-&gt;5' exoribonuclease activity and participates in a multitude of cellular RNA processing and degradation events. The sequence is that of Putative exosome complex exonuclease RRP42 (exosc7) from Dictyostelium discoideum (Social amoeba).